The sequence spans 119 residues: Protein BEX4 (119 aa).

The segment at 1–53 (MESKEELAANNLNGENAQQENEGREQAPTQNEETRHLGGGEGQKPGGNIRRGR) is disordered. Low complexity predominate over residues 8 to 20 (AANNLNGENAQQE). The segment at 31 to 89 (NEETRHLGGGEGQKPGGNIRRGRVRRLVPNFRWAIPNRHIEHNEARDDVERFVGQMMEI) is interaction with SIRT2. Residues 31-119 (NEETRHLGGG…DNHYDFCLIP (89 aa)) are interaction with alpha-tubulin. Cysteine 116 serves as a coordination point for Zn(2+).

The protein belongs to the BEX family. Interacts with alpha-tubulin. Interacts with SIRT2. In terms of processing, ubiquitinated and degraded by the proteasome.

The protein resides in the cytoplasm. The protein localises to the cytoskeleton. It is found in the spindle pole. Its subcellular location is the nucleus. Its function is as follows. May play a role in microtubule deacetylation by negatively regulating the SIRT2 deacetylase activity toward alpha-tubulin and thereby participate in the control of cell cycle progression and genomic stability. In absence of reductive stress, acts as a pseudosubstrate for the CRL2(FEM1B) complex: associates with FEM1B via zinc, thereby preventing association between FEM1B and its substrates. This Pongo abelii (Sumatran orangutan) protein is Protein BEX4.